Reading from the N-terminus, the 101-residue chain is AFA-III adhesin operon regulatory protein (101 aa).

Functionally, regulates the transcription of genes involved in the biosynthesis of afimbrial adhesin-III. The protein is AFA-III adhesin operon regulatory protein (afaA) of Escherichia coli.